Consider the following 278-residue polypeptide: Undecaprenyl-diphosphatase (278 aa).

8 consecutive transmembrane segments (helical) span residues A2–L22, A44–L64, I85–W105, F113–I133, I150–G170, T189–L209, L223–F243, and F253–A273.

Belongs to the UppP family.

It is found in the cell membrane. The catalysed reaction is di-trans,octa-cis-undecaprenyl diphosphate + H2O = di-trans,octa-cis-undecaprenyl phosphate + phosphate + H(+). Functionally, catalyzes the dephosphorylation of undecaprenyl diphosphate (UPP). Confers resistance to bacitracin. The chain is Undecaprenyl-diphosphatase from Desulfitobacterium hafniense (strain DSM 10664 / DCB-2).